The following is a 244-amino-acid chain: Anti-H(O) lectin 1 (244 aa).

N-linked (GlcNAc...) asparagine glycosylation is found at Asn-113 and Asn-117. Residues Glu-127 and Asp-129 each contribute to the Mn(2+) site. 4 residues coordinate Ca(2+): Asp-129, Tyr-131, Asn-137, and Asp-142. Mn(2+) is bound by residues Asp-142 and His-145.

The protein belongs to the leguminous lectin family. Homotetramer.

Its function is as follows. Di-N-acetylchitobiose-binding anti-H(O) lectin. In Cytisophyllum sessilifolium (Sessile-leaved cytisus), this protein is Anti-H(O) lectin 1.